The sequence spans 1194 residues: Multidrug efflux ATP-binding/permease protein BCG_0231 (1194 aa).

6 helical membrane-spanning segments follow: residues 20–40 (LLLG…VPLV), 56–76 (LAPW…LTYV), 130–150 (LLFD…GVAV), 153–173 (WLSV…GLIA), 258–278 (FALG…FVAF), and 279–299 (WACL…LTIA). One can recognise an ABC transmembrane type-1 1 domain in the interval 21 to 301 (LLGFGAALAG…LAGMLTIAQQ (281 aa)). Positions 334-568 (LEFQRVSFGY…CPRYRELLSP (235 aa)) constitute an ABC transporter 1 domain. 367 to 374 (GAPGSGKS) is a binding site for ATP. The next 6 helical transmembrane spans lie at 628–648 (ALSL…PLLI), 660–680 (VLSA…IRWV), 743–763 (LVVA…LLAI), 765–785 (ARLV…TWQF), 847–867 (LLAL…TLVL), and 878–898 (VISV…YTPI). In terms of domain architecture, ABC transmembrane type-1 2 spans 628–910 (ALSLLLVAVQ…LAQMFDDYQR (283 aa)). The 236-residue stretch at 942–1177 (VVFDAVHYSY…GGHYSRLWAA (236 aa)) folds into the ABC transporter 2 domain. 976–983 (GSTGSGKS) is an ATP binding site.

Belongs to the ABC transporter superfamily. Lipid exporter (TC 3.A.1.106) family.

It is found in the cell inner membrane. Overexpression increases resistance to chloramphenicol, ampicillin, streptomycin, tetracyclin and vancomycin. This is Multidrug efflux ATP-binding/permease protein BCG_0231 from Mycobacterium bovis (strain BCG / Pasteur 1173P2).